The sequence spans 339 residues: MEMKEEIEAVKQQFHSELDQVNSSQALADLKVRYLGKKGIFRSFSEKLKQCTDKAKLGSLINDFKTYVEDLLQEKSLVLLASEQAEAFSKEKIDSSLPGDSQPSGGRHILKSILDDVVDIFVHLGFCVREAPNIESEANNFTLLNFTEDHPARQMHDTFYLNATTVLRTHTSNVQARELKKQQPPIKVVAPGLCFRNEDISARSHVLFHQVEAFYVDHNVTFSDLTAILSAFYHSFFQRKTELRFRHSYFPFVEPGIEVDVSCECCGKGCALCKHTGWLEVAGAGMIHPQVLRNGNVDPEIYSGYAVGMGIERLAMLKYGVSDIRLFSENDLRFLQQFS.

Mg(2+) is bound at residue glutamate 254.

This sequence belongs to the class-II aminoacyl-tRNA synthetase family. Phe-tRNA synthetase alpha subunit type 1 subfamily. As to quaternary structure, tetramer of two alpha and two beta subunits. Mg(2+) serves as cofactor.

The protein resides in the cytoplasm. The enzyme catalyses tRNA(Phe) + L-phenylalanine + ATP = L-phenylalanyl-tRNA(Phe) + AMP + diphosphate + H(+). In Chlamydia pneumoniae (Chlamydophila pneumoniae), this protein is Phenylalanine--tRNA ligase alpha subunit (pheS).